A 192-amino-acid polypeptide reads, in one-letter code: Leucine-rich repeat-containing protein 51 (192 aa).

LRR repeat units lie at residues 49 to 71 (SLTQ…NQVA), 80 to 101 (NLAW…LTTF), and 103 to 124 (NLSV…NKLA). In terms of domain architecture, LRRCT spans 137 to 175 (NPMEEEKGYRQYVLCTLSRITTFDFAGVTKADRTTAEVW).

It localises to the cytoplasm. The sequence is that of Leucine-rich repeat-containing protein 51 from Pan troglodytes (Chimpanzee).